The chain runs to 361 residues: Phosphoribosylformylglycinamidine cyclo-ligase (361 aa).

It belongs to the AIR synthase family.

The protein localises to the cytoplasm. The catalysed reaction is 2-formamido-N(1)-(5-O-phospho-beta-D-ribosyl)acetamidine + ATP = 5-amino-1-(5-phospho-beta-D-ribosyl)imidazole + ADP + phosphate + H(+). The protein operates within purine metabolism; IMP biosynthesis via de novo pathway; 5-amino-1-(5-phospho-D-ribosyl)imidazole from N(2)-formyl-N(1)-(5-phospho-D-ribosyl)glycinamide: step 2/2. This is Phosphoribosylformylglycinamidine cyclo-ligase from Bartonella quintana (strain Toulouse) (Rochalimaea quintana).